Reading from the N-terminus, the 428-residue chain is Magnesium transporter MRS2-C (428 aa).

Helical transmembrane passes span 364 to 384 and 400 to 420; these read LLLTTATFVVAIFGVVSGVFG and WTLVITGVCGLVIFCCFIWYF. Positions 384 to 386 match the Required for magnesium transport activity motif; it reads GMN.

Belongs to the CorA metal ion transporter (MIT) (TC 1.A.35.5) family.

The protein resides in the membrane. Functionally, magnesium transporter that may mediate the influx of magnesium. The sequence is that of Magnesium transporter MRS2-C from Oryza sativa subsp. indica (Rice).